The chain runs to 375 residues: Mitogen-activated protein kinase 4a (375 aa).

A Protein kinase domain is found at 39–325; that stretch reads KPPLRPIGRG…VEAALAHPYL (287 aa). ATP contacts are provided by residues 45 to 53 and Lys68; that span reads IGRGAYGIV. The active-site Proton acceptor is Asp165. Position 197 is a phosphothreonine (Thr197). The TXY signature appears at 197–199; the sequence is TEY. Tyr199 is subject to Phosphotyrosine.

This sequence belongs to the protein kinase superfamily. CMGC Ser/Thr protein kinase family. MAP kinase subfamily. Mg(2+) serves as cofactor. Dually phosphorylated on Thr-197 and Tyr-199, which activates the enzyme. Phosphorylated in response to pathogen-associated molecular pattern (PAMP) chitin and in response to necrotrophic fungus B.cinerea spores. Not phosphorylated in response to osmotic stress. In terms of tissue distribution, expressed strongly in the apical cells of caulonemal air filaments and rhizoids in fully developed plants and less strongly, but readily detectable in filamentous protonemal tissue at the edge of the plant consisting of both chloronema and caulonema. When filamentous growth of protonema is promoted, the expression is strongest in newly formed apical tip cells of protonemal tissue.

It localises to the cytoplasm. It is found in the nucleus. The catalysed reaction is L-seryl-[protein] + ATP = O-phospho-L-seryl-[protein] + ADP + H(+). The enzyme catalyses L-threonyl-[protein] + ATP = O-phospho-L-threonyl-[protein] + ADP + H(+). With respect to regulation, activated by threonine and tyrosine phosphorylation. Activated in response to bacterial and fungal pathogen-associated molecular patterns (PAMPs) including chitin, chitosan and peptidyl glycans (PGNs). Activation in response to chitin requires the CERK1, MEKK1a/b, MKK1a/b/c and MPK4a/b signaling pathway. Activated in response to necrotrophic fungus B.cinerea spores. Not activated in response to osmotic stress. Functionally, the CERK1, MEKK1a/b, MKK1a/b/c and MPK4a/b proteins are involved in pathogen defense. The pathway induces rapid growth inhibition, cell wall depositions and accumulation of defense-related transcripts. This protein is required for innate immunity triggered by pathogen-associated molecular patterns (PAMPs). Involved in resistance to necrotrophic fungi B.cinerea and A.brassicicola. Involved in the transduction of signals from chitosan perception to the activation of defense genes. This Physcomitrium patens (Spreading-leaved earth moss) protein is Mitogen-activated protein kinase 4a (MPK4a).